The sequence spans 787 residues: Endonuclease MutS2 (787 aa).

331-338 (GPNTGGKT) lines the ATP pocket. Positions 711 to 786 (IDVRGKTSDD…EQGVTIVELR (76 aa)) constitute a Smr domain.

This sequence belongs to the DNA mismatch repair MutS family. MutS2 subfamily. In terms of assembly, homodimer. Binds to stalled ribosomes, contacting rRNA.

Functionally, endonuclease that is involved in the suppression of homologous recombination and thus may have a key role in the control of bacterial genetic diversity. Acts as a ribosome collision sensor, splitting the ribosome into its 2 subunits. Detects stalled/collided 70S ribosomes which it binds and splits by an ATP-hydrolysis driven conformational change. Acts upstream of the ribosome quality control system (RQC), a ribosome-associated complex that mediates the extraction of incompletely synthesized nascent chains from stalled ribosomes and their subsequent degradation. Probably generates substrates for RQC. This is Endonuclease MutS2 from Caldicellulosiruptor saccharolyticus (strain ATCC 43494 / DSM 8903 / Tp8T 6331).